Here is a 784-residue protein sequence, read N- to C-terminus: Armadillo repeat-containing X-linked protein 2 (784 aa).

Over 1–6 the chain is Mitochondrial intermembrane; the sequence is MSRARD. Mitochondrion outer membrane (MOM)-targeting sequence stretches follow at residues 1 to 6 and 26 to 40; these read MSRARD and KYTR…RLTK. The chain crosses the membrane as a helical; Signal-anchor span at residues 7–27; it reads AGCVAAGIVIGASAWYCVYKY. Topologically, residues 28–784 are cytoplasmic; the sequence is TRGKDQKKKR…VKVIKLVNKF (757 aa). 3 disordered regions span residues 328-353, 388-461, and 488-522; these read TSGG…RTAS, HSGA…ELGM, and PESE…TIPM. Residues 396-418 are compositionally biased toward low complexity; it reads GTSGSSKTAATGKKAAPGAHTGA. Acidic residues predominate over residues 488 to 508; sequence PESEEGESGWTDTESDSDSEP. 3 ARM repeats span residues 528–568, 570–609, and 650–689; these read PYEI…NNAN, SCNQ…NLSE, and ITND…NFAE.

Belongs to the eutherian X-chromosome-specific Armcx family. Widely expressed in the adult nervous tissue, especially in the forebrain, including the cerebral cortex, hippocampus and thalamus.

The protein resides in the mitochondrion. Its subcellular location is the mitochondrion outer membrane. Its function is as follows. May regulate the dynamics and distribution of mitochondria in neural cells. The protein is Armadillo repeat-containing X-linked protein 2 (Armcx2) of Mus musculus (Mouse).